The primary structure comprises 549 residues: Dicarboxylate transporter 2.2, chloroplastic (549 aa).

Residues 1–54 constitute a chloroplast transit peptide; the sequence is MESLALRSISLSASYLSLHRSSSKSFALLPPSISVHTSPTLRSLSISSPRFTLR. The interval 57–79 is disordered; sequence ASSLPEEQNKPQPPPPSPPQPQG. A compositionally biased stretch (pro residues) spans 67-77; it reads PQPPPPSPPQP. 12 helical membrane passes run 79 to 99, 115 to 135, 151 to 171, 220 to 240, 247 to 267, 294 to 314, 344 to 364, 365 to 385, 403 to 423, 436 to 456, 470 to 490, and 523 to 543; these read GAKLIPLAISVSIGLIVRFLI, IFLFTISGLVLGPLPVGAWAF, TAFAAFTNELIWLIAISFFFA, AGGVFLPVIKSLAISAGSYPG, LGSFLIQTQLQCSGASGAILL, WFKVASVPAFVSLLCTPLIIY, NEWIMLGAMAFTVSLWVFGEA, IGIASVVSAMIGLSTLLLLGV, WFAVLIGMAGQLTNLGVVAWM, LTWPASFIILQACYLLIHYLF, FLAMQIAAGVPGVLAALCLAF, and VGFVMALVQAIIWGGVGSFWW.

It belongs to the SLC13A/DASS transporter (TC 2.A.47) family. DIT1 subfamily. In terms of tissue distribution, expressed in roots, rosette and cauline leaves, stems, flowers and siliques.

It is found in the plastid. The protein localises to the chloroplast inner membrane. Functionally, may be involved in the transport of dicarboxylate compounds. The polypeptide is Dicarboxylate transporter 2.2, chloroplastic (DIT2-2) (Arabidopsis thaliana (Mouse-ear cress)).